A 440-amino-acid chain; its full sequence is Methylthioribose-1-phosphate isomerase (440 aa).

D285 acts as the Proton donor in catalysis.

It belongs to the eIF-2B alpha/beta/delta subunits family. MtnA subfamily.

It is found in the cytoplasm. It localises to the nucleus. It carries out the reaction 5-(methylsulfanyl)-alpha-D-ribose 1-phosphate = 5-(methylsulfanyl)-D-ribulose 1-phosphate. Its pathway is amino-acid biosynthesis; L-methionine biosynthesis via salvage pathway; L-methionine from S-methyl-5-thio-alpha-D-ribose 1-phosphate: step 1/6. Functionally, catalyzes the interconversion of methylthioribose-1-phosphate (MTR-1-P) into methylthioribulose-1-phosphate (MTRu-1-P). The chain is Methylthioribose-1-phosphate isomerase (mri1) from Botryotinia fuckeliana (strain B05.10) (Noble rot fungus).